Consider the following 165-residue polypeptide: Probable deoxyuridine 5'-triphosphate nucleotidohydrolase (165 aa).

The span at 39–49 shows a compositional bias: basic and acidic residues; the sequence is GRIDTDGKTIG. A disordered region spans residues 39 to 64; the sequence is GRIDTDGKTIGDRSPVTPTADEDSTD.

It belongs to the dCTP deaminase family. Archaeal dUTPase subfamily.

The catalysed reaction is dUTP + H2O = dUMP + diphosphate + H(+). The protein operates within pyrimidine metabolism; dUMP biosynthesis; dUMP from dCTP (dUTP route): step 2/2. Its function is as follows. This enzyme is involved in nucleotide metabolism: it produces dUMP, the immediate precursor of thymidine nucleotides and it decreases the intracellular concentration of dUTP so that uracil cannot be incorporated into DNA. In Halobacterium salinarum (strain ATCC 29341 / DSM 671 / R1), this protein is Probable deoxyuridine 5'-triphosphate nucleotidohydrolase.